The sequence spans 137 residues: Probable 4-amino-4-deoxy-L-arabinose-phosphoundecaprenol flippase subunit ArnF (137 aa).

Residues 1–3 (MNA) are Cytoplasmic-facing. The chain crosses the membrane as a helical span at residues 4–24 (LRGWLAALGSMLLASAAQLGM). The Periplasmic portion of the chain corresponds to 25 to 44 (RWGMSRLPLPEAWAGQTPER). The helical transmembrane segment at 45–65 (AALLAVALAVAAYAASLLCWL) threads the bilayer. The Cytoplasmic segment spans residues 66–76 (AALRHLPLGRA). A helical transmembrane segment spans residues 77-97 (YSLLSASYALVYLLAASLPAF). The Periplasmic segment spans residues 98–100 (DET). The chain crosses the membrane as a helical span at residues 101–121 (FSTSKILGVGLVVLGVLTVNA). Topologically, residues 122–137 (RRTAAAPAHHPSRKAP) are cytoplasmic.

It belongs to the ArnF family. Heterodimer of ArnE and ArnF.

Its subcellular location is the cell inner membrane. The protein operates within bacterial outer membrane biogenesis; lipopolysaccharide biosynthesis. Translocates 4-amino-4-deoxy-L-arabinose-phosphoundecaprenol (alpha-L-Ara4N-phosphoundecaprenol) from the cytoplasmic to the periplasmic side of the inner membrane. The chain is Probable 4-amino-4-deoxy-L-arabinose-phosphoundecaprenol flippase subunit ArnF from Pseudomonas aeruginosa (strain LESB58).